The chain runs to 266 residues: Hydroxyethylthiazole kinase (266 aa).

Residue methionine 43 coordinates substrate. Residues arginine 119 and threonine 166 each coordinate ATP. Substrate is bound at residue glycine 193.

Belongs to the Thz kinase family. Mg(2+) is required as a cofactor.

The catalysed reaction is 5-(2-hydroxyethyl)-4-methylthiazole + ATP = 4-methyl-5-(2-phosphooxyethyl)-thiazole + ADP + H(+). It functions in the pathway cofactor biosynthesis; thiamine diphosphate biosynthesis; 4-methyl-5-(2-phosphoethyl)-thiazole from 5-(2-hydroxyethyl)-4-methylthiazole: step 1/1. Functionally, catalyzes the phosphorylation of the hydroxyl group of 4-methyl-5-beta-hydroxyethylthiazole (THZ). In Methanococcus maripaludis (strain C7 / ATCC BAA-1331), this protein is Hydroxyethylthiazole kinase.